We begin with the raw amino-acid sequence, 319 residues long: Ribose-phosphate pyrophosphokinase (319 aa).

Residues 41 to 43 (NGE) and 100 to 101 (RQ) contribute to the ATP site. 2 residues coordinate Mg(2+): His134 and Asp175. Residue Lys198 is part of the active site. D-ribose 5-phosphate-binding positions include Arg200, Asp224, and 228–232 (DTAGS).

The protein belongs to the ribose-phosphate pyrophosphokinase family. Class I subfamily. As to quaternary structure, homohexamer. Requires Mg(2+) as cofactor.

The protein resides in the cytoplasm. The catalysed reaction is D-ribose 5-phosphate + ATP = 5-phospho-alpha-D-ribose 1-diphosphate + AMP + H(+). It participates in metabolic intermediate biosynthesis; 5-phospho-alpha-D-ribose 1-diphosphate biosynthesis; 5-phospho-alpha-D-ribose 1-diphosphate from D-ribose 5-phosphate (route I): step 1/1. Functionally, involved in the biosynthesis of the central metabolite phospho-alpha-D-ribosyl-1-pyrophosphate (PRPP) via the transfer of pyrophosphoryl group from ATP to 1-hydroxyl of ribose-5-phosphate (Rib-5-P). This chain is Ribose-phosphate pyrophosphokinase, found in Clostridium acetobutylicum (strain ATCC 824 / DSM 792 / JCM 1419 / IAM 19013 / LMG 5710 / NBRC 13948 / NRRL B-527 / VKM B-1787 / 2291 / W).